Reading from the N-terminus, the 122-residue chain is Phospholipase A2 crotoxin basic subunit CBd (122 aa).

Disulfide bonds link cysteine 26-cysteine 115, cysteine 28-cysteine 44, cysteine 43-cysteine 95, cysteine 49-cysteine 122, cysteine 50-cysteine 88, cysteine 57-cysteine 81, and cysteine 75-cysteine 86. Residues tyrosine 27, glycine 29, and glycine 31 each contribute to the Ca(2+) site. The active site involves histidine 47. Aspartate 48 contributes to the Ca(2+) binding site. Aspartate 89 is a catalytic residue.

Belongs to the phospholipase A2 family. Group II subfamily. D49 sub-subfamily. In terms of assembly, heterodimer of one of the acidic (CA1, CA2, CA3 or CA4) and one of the basic (CBa1, CBa2, CBb, CBc or CBd) subunits; non-covalently linked. The acidic subunit is non-toxic, without enzymatic activity and comprises 3 peptides that are cross-linked by 5 disulfide bridges. The basic subunit is toxic, has phospholipase A2 activity and is composed of a single chain. Multiple variants of each subunit give different crotoxin complexes that can be subdivided into 2 classes: (1) those of high toxicity, low PLA2 activity (CBb, CBc and CBd linked with high affinity to any CA) and high stability (K(d)=4.5 nM) and (2) those of moderate toxicity, high PLA2 activity (CBa2 linked with low affinity to any CA) and low stability (K(d)=25 nM). Interacts with crotoxin inhibitor from Crotalus serum (CICS); the interaction leads to dissociation of the CA-CB heterodimer and to inhibition of PLA2 activity of the CB subunit. Interacts with human NBD1 domain of CFTR. It depends on Ca(2+) as a cofactor. Expressed by the venom gland.

It localises to the secreted. The enzyme catalyses a 1,2-diacyl-sn-glycero-3-phosphocholine + H2O = a 1-acyl-sn-glycero-3-phosphocholine + a fatty acid + H(+). Its function is as follows. Heterodimer CA-CB: Crotoxin is a potent presynaptic neurotoxin that possesses phospholipase A2 (PLA2) activity and exerts a lethal action by blocking neuromuscular transmission. It consists of a non-covalent association of a basic and weakly toxic PLA2 subunit (CBa2, CBb, CBc, or CBd), with a small acidic, non-enzymatic and non-toxic subunit (CA1, CA2, CA3 or CA4). The complex acts by binding to a specific 48-kDa protein (R48) receptor located on presynaptic membranes, forming a transient ternary complex CA-CB-R48, followed by dissociation of the CA-CB complex and release of the CA subunit. At equilibrium, only the CB subunits remain associated with the specific crotoxin receptor. In addition to neurotoxicity, crotoxin has been found to exert myotoxicity, nephrotoxicity, and cardiovascular toxicity. Moreover, anti-inflammatory, immunomodulatory, anti-tumor and analgesic effects of crotoxin have also been reported. Functionally, monomer CBd: The basic subunit of crotoxin is a snake venom phospholipase A2 (PLA2) that exhibits weak neurotoxicity (10-fold less than the heterodimer) and very strong anticoagulant effects by binding to factor Xa (F10) and inhibiting the prothrombinase activity. In addition, it shows the same effects described for the heterodimer and binds the nucleotide-binding domain (NBD1) of CFTR chloride channels and increases the channel current. PLA2 catalyzes the calcium-dependent hydrolysis of the 2-acyl groups in 3-sn-phosphoglycerides. This is Phospholipase A2 crotoxin basic subunit CBd from Crotalus durissus terrificus (South American rattlesnake).